The following is a 508-amino-acid chain: Probable cytosol aminopeptidase (508 aa).

The Mn(2+) site is built by lysine 274 and aspartate 279. The active site involves lysine 286. Mn(2+)-binding residues include aspartate 297, aspartate 356, and glutamate 358. The active site involves arginine 360.

It belongs to the peptidase M17 family. Mn(2+) is required as a cofactor.

The protein localises to the cytoplasm. It carries out the reaction Release of an N-terminal amino acid, Xaa-|-Yaa-, in which Xaa is preferably Leu, but may be other amino acids including Pro although not Arg or Lys, and Yaa may be Pro. Amino acid amides and methyl esters are also readily hydrolyzed, but rates on arylamides are exceedingly low.. The catalysed reaction is Release of an N-terminal amino acid, preferentially leucine, but not glutamic or aspartic acids.. Functionally, presumably involved in the processing and regular turnover of intracellular proteins. Catalyzes the removal of unsubstituted N-terminal amino acids from various peptides. This Paraburkholderia xenovorans (strain LB400) protein is Probable cytosol aminopeptidase.